The following is a 606-amino-acid chain: WD repeat-containing protein 1 (606 aa).

WD repeat units lie at residues 4–45 (EIKK…LRNI), 48–87 (PAVA…IWDT), 93–135 (ILKY…LWDT), 138–176 (SVGE…FFEG), 180–218 (KFKF…IYDG), 224–263 (VCAL…IWDV), 270–306 (STFP…YLDK), 311–351 (KPLR…YWDS), 358–408 (SFSG…KLDV), 432–474 (LKDQ…VYSI), 480–518 (KDEG…VFSV), 523–561 (SENN…VWTL), and 566–604 (TKVK…EWTI). 4 positions are modified to N6-acetyllysine: Lys-28, Lys-81, Lys-95, and Lys-115. Tyr-238 is subject to Phosphotyrosine. The residue at position 480 (Lys-480) is an N6-acetyllysine.

The protein belongs to the WD repeat AIP1 family.

It localises to the cytoplasm. The protein resides in the cytoskeleton. The protein localises to the cell projection. Its subcellular location is the podosome. Induces disassembly of actin filaments in conjunction with ADF/cofilin family proteins. Enhances cofilin-mediated actin severing. Involved in cytokinesis. Involved in chemotactic cell migration by restricting lamellipodial membrane protrusions. Involved in myocardium sarcomere organization. Required for cardiomyocyte growth and maintenance. Involved in megakaryocyte maturation and platelet shedding. Required for the establishment of planar cell polarity (PCP) during follicular epithelium development and for cell shape changes during PCP; the function seems to implicate cooperation with CFL1 and/or DSTN/ADF. Involved in the generation/maintenance of cortical tension. Involved in assembly and maintenance of epithelial apical cell junctions and plays a role in the organization of the perijunctional actomyosin belt. The protein is WD repeat-containing protein 1 (Wdr1) of Rattus norvegicus (Rat).